Consider the following 264-residue polypeptide: tRNA (guanine-N(1)-)-methyltransferase (264 aa).

S-adenosyl-L-methionine contacts are provided by residues Gly116 and 136–141; that span reads VGDFVL.

This sequence belongs to the RNA methyltransferase TrmD family. In terms of assembly, homodimer.

It is found in the cytoplasm. It catalyses the reaction guanosine(37) in tRNA + S-adenosyl-L-methionine = N(1)-methylguanosine(37) in tRNA + S-adenosyl-L-homocysteine + H(+). Its function is as follows. Specifically methylates guanosine-37 in various tRNAs. The protein is tRNA (guanine-N(1)-)-methyltransferase of Koribacter versatilis (strain Ellin345).